The primary structure comprises 1067 residues: Carbamoyl phosphate synthase large chain (1067 aa).

A carboxyphosphate synthetic domain region spans residues 1–401; sequence MPLNKDIKKV…AFLKGIRSLE (401 aa). The ATP site is built by arginine 129, arginine 169, glycine 175, glycine 176, lysine 208, valine 210, glutamate 215, glycine 241, isoleucine 242, histidine 243, glutamine 284, and glutamate 298. The ATP-grasp 1 domain maps to 133 to 327; it reads RDMMNRINQP…IAKVAAKIAL (195 aa). Glutamine 284, glutamate 298, and asparagine 300 together coordinate Mg(2+). Glutamine 284, glutamate 298, and asparagine 300 together coordinate Mn(2+). An oligomerization domain region spans residues 402 to 549; sequence IGKYSLEHKK…YSTYEQYDEV (148 aa). Positions 550-932 are carbamoyl phosphate synthetic domain; the sequence is VVSDNKKVVV…ALYKGFVGAS (383 aa). The 191-residue stretch at 674–864 folds into the ATP-grasp 2 domain; the sequence is DDLLERLNIA…IVDIATRIML (191 aa). Positions 710, 749, 751, 755, 780, 781, 782, 783, 823, and 835 each coordinate ATP. Glutamine 823, glutamate 835, and asparagine 837 together coordinate Mg(2+). Mn(2+)-binding residues include glutamine 823, glutamate 835, and asparagine 837. The MGS-like domain maps to 933–1067; it reads MYTGDKGKTI…NRELEVFNLI (135 aa). The interval 933–1067 is allosteric domain; it reads MYTGDKGKTI…NRELEVFNLI (135 aa).

This sequence belongs to the CarB family. In terms of assembly, composed of two chains; the small (or glutamine) chain promotes the hydrolysis of glutamine to ammonia, which is used by the large (or ammonia) chain to synthesize carbamoyl phosphate. Tetramer of heterodimers (alpha,beta)4. Mg(2+) serves as cofactor. The cofactor is Mn(2+).

The catalysed reaction is hydrogencarbonate + L-glutamine + 2 ATP + H2O = carbamoyl phosphate + L-glutamate + 2 ADP + phosphate + 2 H(+). The enzyme catalyses hydrogencarbonate + NH4(+) + 2 ATP = carbamoyl phosphate + 2 ADP + phosphate + 2 H(+). Its pathway is amino-acid biosynthesis; L-arginine biosynthesis; carbamoyl phosphate from bicarbonate: step 1/1. It participates in pyrimidine metabolism; UMP biosynthesis via de novo pathway; (S)-dihydroorotate from bicarbonate: step 1/3. In terms of biological role, large subunit of the glutamine-dependent carbamoyl phosphate synthetase (CPSase). CPSase catalyzes the formation of carbamoyl phosphate from the ammonia moiety of glutamine, carbonate, and phosphate donated by ATP, constituting the first step of 2 biosynthetic pathways, one leading to arginine and/or urea and the other to pyrimidine nucleotides. The large subunit (synthetase) binds the substrates ammonia (free or transferred from glutamine from the small subunit), hydrogencarbonate and ATP and carries out an ATP-coupled ligase reaction, activating hydrogencarbonate by forming carboxy phosphate which reacts with ammonia to form carbamoyl phosphate. This is Carbamoyl phosphate synthase large chain from Clostridium perfringens (strain 13 / Type A).